Here is a 276-residue protein sequence, read N- to C-terminus: Large ribosomal subunit protein uL2 (276 aa).

The interval 210-276 is disordered; sequence GRNRHRGIRP…KLIISRRKGK (67 aa). The span at 230–240 shows a compositional bias: basic and acidic residues; sequence DHPHGGGEGKK. Residues 255–276 are compositionally biased toward basic residues; the sequence is KGAKTRRKKASDKLIISRRKGK.

Belongs to the universal ribosomal protein uL2 family. In terms of assembly, part of the 50S ribosomal subunit. Forms a bridge to the 30S subunit in the 70S ribosome.

In terms of biological role, one of the primary rRNA binding proteins. Required for association of the 30S and 50S subunits to form the 70S ribosome, for tRNA binding and peptide bond formation. It has been suggested to have peptidyltransferase activity; this is somewhat controversial. Makes several contacts with the 16S rRNA in the 70S ribosome. The chain is Large ribosomal subunit protein uL2 from Campylobacter jejuni subsp. jejuni serotype O:6 (strain 81116 / NCTC 11828).